The sequence spans 519 residues: Xylose import ATP-binding protein XylG (519 aa).

2 consecutive ABC transporter domains span residues 6–245 and 262–507; these read LTMR…VGRE and LDVR…LKPA. ATP is bound at residue 38-45; sequence GENGAGKS.

This sequence belongs to the ABC transporter superfamily. Xylose importer (TC 3.A.1.2.4) family. As to quaternary structure, the complex is composed of two ATP-binding proteins (XylG), two transmembrane proteins (XylH) and a solute-binding protein (XylF).

It is found in the cell inner membrane. It catalyses the reaction D-xylose(out) + ATP + H2O = D-xylose(in) + ADP + phosphate + H(+). Its function is as follows. Part of the ABC transporter complex XylFGH involved in xylose import. Responsible for energy coupling to the transport system. In Burkholderia cenocepacia (strain HI2424), this protein is Xylose import ATP-binding protein XylG.